Consider the following 451-residue polypeptide: Glutamyl-tRNA(Gln) amidotransferase subunit D (451 aa).

The interval proline 78–proline 97 is disordered. In terms of domain architecture, Asparaginase/glutaminase spans proline 99–asparagine 432. Active-site residues include threonine 109, threonine 187, aspartate 188, and lysine 266.

Belongs to the asparaginase 1 family. GatD subfamily. In terms of assembly, heterodimer of GatD and GatE.

The enzyme catalyses L-glutamyl-tRNA(Gln) + L-glutamine + ATP + H2O = L-glutaminyl-tRNA(Gln) + L-glutamate + ADP + phosphate + H(+). Its function is as follows. Allows the formation of correctly charged Gln-tRNA(Gln) through the transamidation of misacylated Glu-tRNA(Gln) in organisms which lack glutaminyl-tRNA synthetase. The reaction takes place in the presence of glutamine and ATP through an activated gamma-phospho-Glu-tRNA(Gln). The GatDE system is specific for glutamate and does not act on aspartate. This chain is Glutamyl-tRNA(Gln) amidotransferase subunit D, found in Thermofilum pendens (strain DSM 2475 / Hrk 5).